We begin with the raw amino-acid sequence, 736 residues long: Na(+)/H(+) antiporter NhaA (736 aa).

The segment at 1 to 387 (MNHSPQSARP…ICGYLLLRAA (387 aa)) is na(+)/H(+) antiporter NhaA. A run of 11 helical transmembrane segments spans residues 23–43 (AGGITLMAAAALALIVANSPF), 58–78 (LSLAHWINDALMAIFFLLVGL), 96–116 (MLPGIAAAGGVILPAIIFAVL), 126–146 (GWAVPSATDIAFALGVLSLLG), 155–175 (VFLATLAILDDLAAVVIIAIF), 178–198 (AEISMPYLGAAFITAAVLFVM), 201–221 (MDVVKLLPYLISAVILWFFVF), 265–285 (VAFIVVPIFGFANAGISFKGL), 298–318 (ILLGLFLGKQFGVFGAAWLAI), 334–354 (LYGVAILCGIGFTMSIFIGLL), and 367–387 (IGVLSGSALSAICGYLLLRAA). The peptidase S49 stretch occupies residues 388–736 (RPDQSAANPL…EKAIWARYGL (349 aa)).

This sequence in the N-terminal section; belongs to the NhaA Na(+)/H(+) (TC 2.A.33) antiporter family. In the C-terminal section; belongs to the peptidase S49 family.

It localises to the cell inner membrane. The catalysed reaction is Na(+)(in) + 2 H(+)(out) = Na(+)(out) + 2 H(+)(in). Functionally, na(+)/H(+) antiporter that extrudes sodium in exchange for external protons. The sequence is that of Na(+)/H(+) antiporter NhaA from Brucella melitensis biotype 1 (strain ATCC 23456 / CCUG 17765 / NCTC 10094 / 16M).